The primary structure comprises 338 residues: Glyceraldehyde-3-phosphate dehydrogenase 2 (338 aa).

NAD(+) is bound by residues 13 to 14 (TI) and G111. 140–142 (SCN) lines the D-glyceraldehyde 3-phosphate pocket. C141 acts as the Nucleophile in catalysis. Position 169 (R169) interacts with NAD(+). Residue 195–196 (HG) participates in D-glyceraldehyde 3-phosphate binding. Q300 provides a ligand contact to NAD(+).

Belongs to the glyceraldehyde-3-phosphate dehydrogenase family. As to quaternary structure, homotetramer.

It localises to the cytoplasm. The enzyme catalyses D-glyceraldehyde 3-phosphate + phosphate + NADP(+) = (2R)-3-phospho-glyceroyl phosphate + NADPH + H(+). It catalyses the reaction D-glyceraldehyde 3-phosphate + phosphate + NAD(+) = (2R)-3-phospho-glyceroyl phosphate + NADH + H(+). The protein operates within carbohydrate degradation; glycolysis; pyruvate from D-glyceraldehyde 3-phosphate: step 1/5. This chain is Glyceraldehyde-3-phosphate dehydrogenase 2, found in Methanosarcina barkeri (strain Fusaro / DSM 804).